Consider the following 145-residue polypeptide: D-aminoacyl-tRNA deacylase (145 aa).

The Gly-cisPro motif, important for rejection of L-amino acids signature appears at 137–138 (GP).

This sequence belongs to the DTD family. Homodimer.

It is found in the cytoplasm. It catalyses the reaction glycyl-tRNA(Ala) + H2O = tRNA(Ala) + glycine + H(+). The enzyme catalyses a D-aminoacyl-tRNA + H2O = a tRNA + a D-alpha-amino acid + H(+). In terms of biological role, an aminoacyl-tRNA editing enzyme that deacylates mischarged D-aminoacyl-tRNAs. Also deacylates mischarged glycyl-tRNA(Ala), protecting cells against glycine mischarging by AlaRS. Acts via tRNA-based rather than protein-based catalysis; rejects L-amino acids rather than detecting D-amino acids in the active site. By recycling D-aminoacyl-tRNA to D-amino acids and free tRNA molecules, this enzyme counteracts the toxicity associated with the formation of D-aminoacyl-tRNA entities in vivo and helps enforce protein L-homochirality. In Pseudomonas putida (strain ATCC 47054 / DSM 6125 / CFBP 8728 / NCIMB 11950 / KT2440), this protein is D-aminoacyl-tRNA deacylase.